A 228-amino-acid polypeptide reads, in one-letter code: R-spondin-4 (228 aa).

The signal sequence occupies residues 1–19 (MRAPLCLLLLLAHAVDMLA). A glycan (N-linked (GlcNAc...) asparagine) is linked at N34. 11 disulfides stabilise this stretch: C35–C41, C38–C47, C50–C69, C73–C88, C91–C98, C95–C104, C107–C118, C122–C135, C139–C181, C150–C157, and C190–C196. Residues 85–128 (ANRCKKCGATCESCFSQDFCIRCKRRFHLYKGKCLPSCPPGTLT) form an FU repeat. The TSP type-1 domain occupies 138-197 (ECEPSPWGSWSPCIHNGKTCGSGWGLETRVREAGPAKQEETASCRVLSESRKCPIKRLCP). A disordered region spans residues 193–228 (KRLCPGERNPRQKNRKDRRQRKDRKLERRPHQRGSQ). The span at 203–228 (RQKNRKDRRQRKDRKLERRPHQRGSQ) shows a compositional bias: basic residues.

This sequence belongs to the R-spondin family. As to quaternary structure, binds heparin. Interacts with LGR4, LGR5 and LGR6.

It localises to the secreted. Functionally, activator of the canonical Wnt signaling pathway by acting as a ligand for LGR4-6 receptors. Upon binding to LGR4-6 (LGR4, LGR5 or LGR6), LGR4-6 associate with phosphorylated LRP6 and frizzled receptors that are activated by extracellular Wnt receptors, triggering the canonical Wnt signaling pathway to increase expression of target genes. Also regulates the canonical Wnt/beta-catenin-dependent pathway and non-canonical Wnt signaling by acting as an inhibitor of ZNRF3, an important regulator of the Wnt signaling pathway. In Mus musculus (Mouse), this protein is R-spondin-4 (Rspo4).